Reading from the N-terminus, the 158-residue chain is MNKKKNAPVRKIIADNRKARFNFEILNNLEAGLVLQGAEVKSLRSNHANIAESYASFENGELWLVNSYIPEYTQANRFNHEPRRLRKLLLSKREMARFFNATSREGMTLVPLKLYFNERGRVKLEIALARGKKLHDKRETEKKRDWGREKARLLKRYG.

Belongs to the SmpB family.

The protein localises to the cytoplasm. Functionally, required for rescue of stalled ribosomes mediated by trans-translation. Binds to transfer-messenger RNA (tmRNA), required for stable association of tmRNA with ribosomes. tmRNA and SmpB together mimic tRNA shape, replacing the anticodon stem-loop with SmpB. tmRNA is encoded by the ssrA gene; the 2 termini fold to resemble tRNA(Ala) and it encodes a 'tag peptide', a short internal open reading frame. During trans-translation Ala-aminoacylated tmRNA acts like a tRNA, entering the A-site of stalled ribosomes, displacing the stalled mRNA. The ribosome then switches to translate the ORF on the tmRNA; the nascent peptide is terminated with the 'tag peptide' encoded by the tmRNA and targeted for degradation. The ribosome is freed to recommence translation, which seems to be the essential function of trans-translation. The sequence is that of SsrA-binding protein from Bartonella tribocorum (strain CIP 105476 / IBS 506).